Consider the following 366-residue polypeptide: Histidinol-phosphate aminotransferase 2 (366 aa).

Position 226 is an N6-(pyridoxal phosphate)lysine (K226).

Belongs to the class-II pyridoxal-phosphate-dependent aminotransferase family. Histidinol-phosphate aminotransferase subfamily. Homodimer. Requires pyridoxal 5'-phosphate as cofactor.

The catalysed reaction is L-histidinol phosphate + 2-oxoglutarate = 3-(imidazol-4-yl)-2-oxopropyl phosphate + L-glutamate. It functions in the pathway amino-acid biosynthesis; L-histidine biosynthesis; L-histidine from 5-phospho-alpha-D-ribose 1-diphosphate: step 7/9. The sequence is that of Histidinol-phosphate aminotransferase 2 from Cupriavidus pinatubonensis (strain JMP 134 / LMG 1197) (Cupriavidus necator (strain JMP 134)).